The chain runs to 163 residues: Protein MATERNALLY EXPRESSED GENE 5 (163 aa).

The RRM domain occupies 38 to 117; sequence STLYIEGLPA…DDVNVSAPAE (80 aa). Intrachain disulfides connect Cys-140/Cys-162 and Cys-143/Cys-151.

This sequence belongs to the MEG family. As to expression, ubiquitous.

The protein is Protein MATERNALLY EXPRESSED GENE 5 (MEG5) of Zea mays (Maize).